Here is a 746-residue protein sequence, read N- to C-terminus: Polyribonucleotide nucleotidyltransferase (746 aa).

Residues Asp519 and Asp525 each coordinate Mg(2+). In terms of domain architecture, KH spans 585–644 (PRVIAVKIPVDKIGEVIGPKGKMINQIQEDTGADISIEDDGTVYIGATNGPSADAARSAI). Residues 656–728 (GERYLGTVVK…DRGKLSLSPV (73 aa)) form the S1 motif domain.

Belongs to the polyribonucleotide nucleotidyltransferase family. Requires Mg(2+) as cofactor.

Its subcellular location is the cytoplasm. It carries out the reaction RNA(n+1) + phosphate = RNA(n) + a ribonucleoside 5'-diphosphate. In terms of biological role, involved in mRNA degradation. Catalyzes the phosphorolysis of single-stranded polyribonucleotides processively in the 3'- to 5'-direction. This chain is Polyribonucleotide nucleotidyltransferase, found in Arthrobacter sp. (strain FB24).